Here is a 375-residue protein sequence, read N- to C-terminus: MTEEYFIQGNDACARGAISAGCRFFAGYPITPSTEIAEEMAVLLPGEGGVFVQMEDEIGALGAVIGAVWGGVKGMTATSGPGFSLMQEHVGYAAMTETPLVIVDVQRGSPSTGQPTMASQSDMMQARWGSHGDYEIIALSPSSVQECFDFTVRAFNLAEEYRVPVVVLSDEIVGHMREKITIPDKVEIRKRKSPTSPPGEFIPFKPQGDFVPEMPAFGDGYRVPVTGLTHDERGYPDASNPEGHEKLVKRLCDKILNHRDKIVDVQKGWTDDADITVISYGAPSRSVATAVKMARSEGVRAGYIKINTPWPFPETEIREAAESSRKLLVVEMNLGQMFYEVQRVASGMAEVELLPKIGGEIHRPDEILNKIMGMK.

In terms of assembly, heterotetramer of the KorA, KorB, KorC and KorD subunits.

The enzyme catalyses 2 oxidized [2Fe-2S]-[ferredoxin] + 2-oxoglutarate + CoA = succinyl-CoA + 2 reduced [2Fe-2S]-[ferredoxin] + CO2 + H(+). The sequence is that of 2-oxoglutarate synthase subunit KorA (korA) from Methanothermobacter marburgensis (strain ATCC BAA-927 / DSM 2133 / JCM 14651 / NBRC 100331 / OCM 82 / Marburg) (Methanobacterium thermoautotrophicum).